Here is a 394-residue protein sequence, read N- to C-terminus: Elongation factor Tu (394 aa).

One can recognise a tr-type G domain in the interval 10–204 (KEHANIGTIG…AVDDYIPTPE (195 aa)). Positions 19–26 (GHVDHGKT) are G1. 19–26 (GHVDHGKT) contacts GTP. A Mg(2+)-binding site is contributed by T26. Residues 60–64 (GITIN) form a G2 region. The G3 stretch occupies residues 81 to 84 (DCPG). GTP contacts are provided by residues 81-85 (DCPGH) and 136-139 (NKVD). The interval 136 to 139 (NKVD) is G4. The tract at residues 174 to 176 (SAL) is G5.

This sequence belongs to the TRAFAC class translation factor GTPase superfamily. Classic translation factor GTPase family. EF-Tu/EF-1A subfamily. In terms of assembly, monomer.

It is found in the cytoplasm. It catalyses the reaction GTP + H2O = GDP + phosphate + H(+). Functionally, GTP hydrolase that promotes the GTP-dependent binding of aminoacyl-tRNA to the A-site of ribosomes during protein biosynthesis. The chain is Elongation factor Tu from Staphylococcus haemolyticus (strain JCSC1435).